Here is a 187-residue protein sequence, read N- to C-terminus: MAISKPPPLHFTFFHNQDSSIDTSDSNLALSIDTSRRRRDVLLTISGTLIPQLFFFDRKRSSSANAADFFNFGAPPPEPERTVELAQEGLRKNAENIKRIKEIMIEKKLWKEGGKELRRSASNMKQDFYLIIQAKPPKDRPLFRSLYSSLFNSITKMDYAARDGDETKVLEYYINIVAILDDIFPRI.

A chloroplast-targeting transit peptide spans 1 to 32; it reads MAISKPPPLHFTFFHNQDSSIDTSDSNLALSI. Residues 33–60 constitute a thylakoid transit peptide; the sequence is DTSRRRRDVLLTISGTLIPQLFFFDRKR.

This sequence belongs to the PsbQ family. As to quaternary structure, subunit of the lumenal protuberance of the NDH complex.

The protein localises to the plastid. The protein resides in the chloroplast thylakoid membrane. In terms of biological role, required for both formation and activity of the chloroplast NAD(P)H dehydrogenase (NDH) complex. In Arabidopsis thaliana (Mouse-ear cress), this protein is PsbQ-like protein 3, chloroplastic (PQL3).